Here is a 257-residue protein sequence, read N- to C-terminus: Undecaprenyl-diphosphatase (257 aa).

8 consecutive transmembrane segments (helical) span residues 4–24 (LFKA…PISS), 51–71 (HVGT…NIFF), 78–98 (LFII…HDLI), 106–126 (LIIV…EKVG), 133–153 (ITLS…IPGV), 171–191 (AYAA…AAML), 207–227 (LFII…KFLL), and 235–255 (LNLF…LYFF).

It belongs to the UppP family.

It localises to the cell inner membrane. It catalyses the reaction di-trans,octa-cis-undecaprenyl diphosphate + H2O = di-trans,octa-cis-undecaprenyl phosphate + phosphate + H(+). In terms of biological role, catalyzes the dephosphorylation of undecaprenyl diphosphate (UPP). Confers resistance to bacitracin. This is Undecaprenyl-diphosphatase from Thermodesulfovibrio yellowstonii (strain ATCC 51303 / DSM 11347 / YP87).